Here is a 431-residue protein sequence, read N- to C-terminus: Enolase (431 aa).

A (2R)-2-phosphoglycerate-binding site is contributed by Gln-167. The active-site Proton donor is the Glu-209. Positions 246, 289, and 316 each coordinate Mg(2+). (2R)-2-phosphoglycerate-binding residues include Lys-341, Arg-370, Ser-371, and Lys-392. Residue Lys-341 is the Proton acceptor of the active site.

This sequence belongs to the enolase family. Component of the RNA degradosome, a multiprotein complex involved in RNA processing and mRNA degradation. The cofactor is Mg(2+).

The protein resides in the cytoplasm. Its subcellular location is the secreted. It is found in the cell surface. It carries out the reaction (2R)-2-phosphoglycerate = phosphoenolpyruvate + H2O. It participates in carbohydrate degradation; glycolysis; pyruvate from D-glyceraldehyde 3-phosphate: step 4/5. Its function is as follows. Catalyzes the reversible conversion of 2-phosphoglycerate (2-PG) into phosphoenolpyruvate (PEP). It is essential for the degradation of carbohydrates via glycolysis. This is Enolase from Shewanella sp. (strain ANA-3).